Reading from the N-terminus, the 146-residue chain is D-aminoacyl-tRNA deacylase (146 aa).

Residues 137–138 (GP) carry the Gly-cisPro motif, important for rejection of L-amino acids motif.

This sequence belongs to the DTD family. As to quaternary structure, homodimer.

It localises to the cytoplasm. It catalyses the reaction glycyl-tRNA(Ala) + H2O = tRNA(Ala) + glycine + H(+). It carries out the reaction a D-aminoacyl-tRNA + H2O = a tRNA + a D-alpha-amino acid + H(+). Its function is as follows. An aminoacyl-tRNA editing enzyme that deacylates mischarged D-aminoacyl-tRNAs. Also deacylates mischarged glycyl-tRNA(Ala), protecting cells against glycine mischarging by AlaRS. Acts via tRNA-based rather than protein-based catalysis; rejects L-amino acids rather than detecting D-amino acids in the active site. By recycling D-aminoacyl-tRNA to D-amino acids and free tRNA molecules, this enzyme counteracts the toxicity associated with the formation of D-aminoacyl-tRNA entities in vivo and helps enforce protein L-homochirality. This is D-aminoacyl-tRNA deacylase from Deinococcus deserti (strain DSM 17065 / CIP 109153 / LMG 22923 / VCD115).